The following is a 508-amino-acid chain: Early growth response protein 1 (508 aa).

2 disordered regions span residues 18 to 78 (PQFL…ESFS) and 136 to 210 (MTNP…QYPP). A compositionally biased stretch (low complexity) spans 33–42 (NNSSSSSSSS). Positions 43–52 (SGGGGGGGSN) are enriched in gly residues. Positions 139–164 (PPTSSSSAPSPAASSSSSASQSPPLS) are enriched in low complexity. Residue K278 forms a Glycyl lysine isopeptide (Lys-Gly) (interchain with G-Cter in SUMO2) linkage. The segment at 292–311 (SRMRKYPNRPSKTPPHERPY) is disordered. C2H2-type zinc fingers lie at residues 311-335 (YACPVESCDRRFSRSDELTRHIRIH), 341-363 (FQCRICMRNFSRSDHLTTHIRTH), and 369-391 (FACDICGRKFARSDERKRHTKIH). The tract at residues 382-453 (DERKRHTKIH…SSTYPSPAHS (72 aa)) is disordered. A compositionally biased stretch (basic residues) spans 386–396 (RHTKIHLRQKD). Residues 402–450 (SVVASSAASSLSSYPSPVATSYPSPATTSFPSPVPTSYSSPGSSTYPSP) are compositionally biased toward low complexity. 7 repeat units span residues 413–420 (SSYPSPVA), 421–428 (TSYPSPAT), 429–436 (TSFPSPVP), 437–444 (TSYSSPGS), 445–452 (STYPSPAH), 453–460 (SGFPSPSV), and 462–468 (TTYASVP). Residues 413 to 468 (SSYPSPVATSYPSPATTSFPSPVPTSYSSPGSSTYPSPAHSGFPSPSVATTYASVP) are 7 X 8 AA tandem repeats of [TS](2)-[FY]-[PS]-S-P-[GSAV]-X.

This sequence belongs to the EGR C2H2-type zinc-finger protein family. Interacts with SNAI1 and SP1 upon 12-O-tetradecanoylphorbol-13-acetate (TPA) induction. In terms of tissue distribution, detected in kidney thick ascending limbs and collecting ducts (at protein level).

It is found in the nucleus. Its subcellular location is the cytoplasm. Transcriptional regulator. Recognizes and binds to the DNA sequence 5'-GCG(T/G)GGGCG-3'(EGR-site) in the promoter region of target genes. Binds double-stranded target DNA, irrespective of the cytosine methylation status. Regulates the transcription of numerous target genes, and thereby plays an important role in regulating the response to growth factors, DNA damage, and ischemia. Plays a role in the regulation of cell survival, proliferation and cell death. Activates expression of p53/TP53 and TGFB1, and thereby helps prevent tumor formation. Required for normal progress through mitosis and normal proliferation of hepatocytes after partial hepatectomy. Mediates responses to ischemia and hypoxia; regulates the expression of proteins such as IL1B and CXCL2 that are involved in inflammatory processes and development of tissue damage after ischemia. Regulates biosynthesis of luteinizing hormone (LHB) in the pituitary. Regulates the amplitude of the expression rhythms of clock genes: BMAL1, PER2 and NR1D1 in the liver via the activation of PER1 (clock repressor) transcription. Regulates the rhythmic expression of core-clock gene BMAL1 in the suprachiasmatic nucleus (SCN). Regulates biosynthesis of glucocorticoid receptor GR/NR3C1 in the hippocampus and thereby may play a role in the behavioral and hypothalamic-pituitary-adrenal responses to stress in offspring. The protein is Early growth response protein 1 (Egr1) of Rattus norvegicus (Rat).